The chain runs to 488 residues: Zinc finger protein 345 (488 aa).

15 consecutive C2H2-type zinc fingers follow at residues 62 to 84 (LECK…QRIH), 90 to 112 (YECK…QRIH), 118 to 140 (FECK…QRIH), 146 to 168 (YECK…QIIH), 174 to 196 (YECK…HRIH), 202 to 224 (YECI…RRIH), 230 to 252 (YECK…QRIH), 258 to 280 (YICN…QRIH), 286 to 308 (YVCK…QRIH), 314 to 336 (YECK…QRMH), 342 to 364 (YECK…HRIH), 370 to 392 (YECK…QLIH), 398 to 420 (YECK…QRIH), 426 to 448 (YECK…QRIH), and 454 to 476 (YECK…KKSH).

The protein belongs to the krueppel C2H2-type zinc-finger protein family.

The protein resides in the nucleus. In terms of biological role, may be involved in transcriptional regulation. The chain is Zinc finger protein 345 (ZNF345) from Homo sapiens (Human).